Reading from the N-terminus, the 350-residue chain is L-serine dehydratase (350 aa).

At K62 the chain carries N6-(pyridoxal phosphate)lysine.

The protein belongs to the serine/threonine dehydratase family. Requires pyridoxal 5'-phosphate as cofactor.

The protein localises to the cytoplasm. The catalysed reaction is L-serine = pyruvate + NH4(+). It participates in carbohydrate biosynthesis; gluconeogenesis. This Dictyostelium discoideum (Social amoeba) protein is L-serine dehydratase (sds).